The chain runs to 212 residues: MSLFDKKHLVSPADALPGRNTPMPVATLHAVNGHSMTNEPDGMEIAIFAMGCFWGVERLFWQLPGVYSTAAGYTGGYTPNPTYREVCSGDTGHAEAVRIVYDPSVISYEQLLQVFWENHDPAQGMRQGNDHGTQYRSAIYPLTPEQDAAARASLERFQAAMLAADDDRHITTEIANATPFYYAEDDHQQYLHKNPYGYCGIGGIGVCLPPEA.

C52 is a catalytic residue.

The protein belongs to the MsrA Met sulfoxide reductase family.

The catalysed reaction is L-methionyl-[protein] + [thioredoxin]-disulfide + H2O = L-methionyl-(S)-S-oxide-[protein] + [thioredoxin]-dithiol. It catalyses the reaction [thioredoxin]-disulfide + L-methionine + H2O = L-methionine (S)-S-oxide + [thioredoxin]-dithiol. Functionally, has an important function as a repair enzyme for proteins that have been inactivated by oxidation. Catalyzes the reversible oxidation-reduction of methionine sulfoxide in proteins to methionine. In Shigella boydii serotype 4 (strain Sb227), this protein is Peptide methionine sulfoxide reductase MsrA.